Consider the following 640-residue polypeptide: Rab proteins geranylgeranyltransferase component A (640 aa).

Disordered regions lie at residues 414–439 (DILGDNNNNNNNNNNNNNNNNNNNNN) and 594–640 (HNEN…EMEL). Over residues 419-439 (NNNNNNNNNNNNNNNNNNNNN) the composition is skewed to low complexity. Residues 604–624 (IDSDEDEDEDINDMNDNEEED) are compositionally biased toward acidic residues.

Belongs to the Rab GDI family.

In terms of biological role, substrate-binding subunit (component A) of the Rab geranylgeranyltransferase (GGTase) complex. Binds unprenylated Rab proteins and presents the substrate peptide to the catalytic component B. The component A is thought to be regenerated by transferring its prenylated Rab back to the donor membrane. The chain is Rab proteins geranylgeranyltransferase component A (MRS6) from Candida albicans (Yeast).